A 1130-amino-acid polypeptide reads, in one-letter code: Sterol regulatory element-binding protein 2 (1130 aa).

A transcriptional activation (acidic) region spans residues 1–50 (MDESSELGVLETMETLTELGDELTLGDIDEMLQFVSNQVGEFPDLFSEQL). Residues 1 to 470 (MDESSELGVL…VALGMVDRSR (470 aa)) are Cytoplasmic-facing. The segment at 53–133 (SFPGGGSNGG…PQPQPQPPAQ (81 aa)) is disordered. Positions 55-64 (PGGGSNGGSG) are enriched in gly residues. Residues 83-93 (RSFSQVPLSTF) show a composition bias toward polar residues. Low complexity predominate over residues 94–104 (SPSAASPQAPA). Residues 111–131 (PTPPRATPVLQPRPQPQPQPP) are compositionally biased toward pro residues. Residues 226–480 (QQVPVLVQPQ…ILLCVLTFLG (255 aa)) are interaction with LMNA. Residues 319–369 (ERRTTHNIIEKRYRSSINDKIIELKDLVMGTDAKMHKSGVLRKAIDYIKYL) enclose the bHLH domain. The tract at residues 369–390 (LQQVNHKLRQENMVLKLANQKN) is leucine-zipper. Residue K453 forms a Glycyl lysine isopeptide (Lys-Gly) (interchain with G-Cter in SUMO2) linkage. The helical transmembrane segment at 471–491 (ILLCVLTFLGLSFNPLTSLLQ) threads the bilayer. Topologically, residues 492 to 522 (WGGAHNTDQHPYSGSGRSVLSLESGAGGWFD) are lumenal. Residues 523–543 (WMVPTLLLWLVNGVIVLSVFV) traverse the membrane as a helical segment. Topologically, residues 544-1130 (KLLVHGEPVI…LGGGTAIAAS (587 aa)) are cytoplasmic. A Phosphoserine modification is found at S1087.

This sequence belongs to the SREBP family. In terms of assembly, forms a tight complex with SCAP, the SCAP-SREBP complex, in the endoplasmic reticulum membrane and the Golgi apparatus. Interacts with PAQR3; the interaction anchors the SCAP-SREBP complex to the Golgi apparatus in low cholesterol conditions. Interacts (via C-terminal domain) with RNF139. Homodimer; efficient DNA binding of the soluble transcription factor fragment requires dimerization with another bHLH protein. Interacts with LMNA. Processed in the Golgi apparatus, releasing the protein from the membrane. At low cholesterol the SCAP-SREBP complex is recruited into COPII vesicles for export from the endoplasmic reticulum. In the Golgi, complex SREBPs are cleaved sequentially by site-1 (MBTPS1, S1P) and site-2 (MBTPS2, S2P) proteases. The first cleavage by site-1 protease occurs within the luminal loop, the second cleavage by site-2 protease occurs within the first transmembrane domain, releasing the transcription factor from the Golgi membrane. Apoptosis triggers cleavage by the cysteine proteases caspase-3 and caspase-7. Cleavage and activation is induced by mediated cholesterol efflux. In terms of processing, phosphorylated by AMPK, leading to suppress protein processing and nuclear translocation, and repress target gene expression. Post-translationally, SCAP-free SREBF2 is ubiquitinated by the BCR(ARMC5) complex, leading to its degradation. Ubiquitinated; the nuclear form has a rapid turnover and is rapidly ubiquitinated and degraded by the proteasome in the nucleus.

Its subcellular location is the endoplasmic reticulum membrane. The protein localises to the golgi apparatus membrane. It localises to the cytoplasmic vesicle. The protein resides in the COPII-coated vesicle membrane. It is found in the nucleus. Activation by cleavage is down-regulated upon activation of SIRT3-dependent PRKAA1/AMPK-alpha signaling cascade which leads to inhibition of ATP-consuming lipogenesis to restore cellular energy balance. Precursor of the transcription factor form (Processed sterol regulatory element-binding protein 2), which is embedded in the endoplasmic reticulum membrane. Low sterol concentrations promote processing of this form, releasing the transcription factor form that translocates into the nucleus and activates transcription of genes involved in cholesterol biosynthesis. Its function is as follows. Key transcription factor that regulates expression of genes involved in cholesterol biosynthesis. Binds to the sterol regulatory element 1 (SRE-1) (5'-ATCACCCCAC-3'). Has dual sequence specificity binding to both an E-box motif (5'-ATCACGTGA-3') and to SRE-1 (5'-ATCACCCCAC-3'). Regulates transcription of genes related to cholesterol synthesis pathway. The chain is Sterol regulatory element-binding protein 2 from Mus musculus (Mouse).